Reading from the N-terminus, the 41-residue chain is Phospholipase A2 homolog nigroviriditoxin acidic subunit A (41 aa).

It belongs to the phospholipase A2 family. Group II subfamily. D49 sub-subfamily. In terms of assembly, nigroviriditoxin is a heterodimer of an acidic subunit A and a basic subunit B. In terms of tissue distribution, expressed by the venom gland.

The protein localises to the secreted. In terms of biological role, heterodimer A-B: Nigroviriditoxin possesses phospholipase A2 (PLA2) activity. It consists of a non-covalent association of a basic PLA2 subunit B with a non-enzymatic subunit A. Functionally, subunit A: The acidic subunit of nigroviriditoxin probably is a heterotrimer of three disulfide-linked chains generated by post-translational maturation of a PLA2-like precursor. It appears to have no PLA2 activity of its own, instead inhibiting the catalytic activity of subunit B. It is not toxic to mice by itself but increases toxicity of subunit B. This is Phospholipase A2 homolog nigroviriditoxin acidic subunit A from Bothriechis nigroviridis (Black-speckled palm pit viper).